The chain runs to 154 residues: Ribonuclease H (154 aa).

Residues 1–141 enclose the RNase H type-1 domain; the sequence is MKRIEAYTDG…ADELARAGME (141 aa). Asp-9, Glu-47, Asp-69, and Asp-133 together coordinate Mg(2+).

It belongs to the RNase H family. In terms of assembly, monomer. The cofactor is Mg(2+).

The protein localises to the cytoplasm. It carries out the reaction Endonucleolytic cleavage to 5'-phosphomonoester.. Functionally, endonuclease that specifically degrades the RNA of RNA-DNA hybrids. This is Ribonuclease H from Brucella abortus (strain 2308).